Consider the following 117-residue polypeptide: Large ribosomal subunit protein bL19 (117 aa).

This sequence belongs to the bacterial ribosomal protein bL19 family.

In terms of biological role, this protein is located at the 30S-50S ribosomal subunit interface and may play a role in the structure and function of the aminoacyl-tRNA binding site. This is Large ribosomal subunit protein bL19 from Thioalkalivibrio sulfidiphilus (strain HL-EbGR7).